A 78-amino-acid polypeptide reads, in one-letter code: Large ribosomal subunit protein bL28 (78 aa).

This sequence belongs to the bacterial ribosomal protein bL28 family.

This Synechococcus sp. (strain JA-2-3B'a(2-13)) (Cyanobacteria bacterium Yellowstone B-Prime) protein is Large ribosomal subunit protein bL28.